Consider the following 790-residue polypeptide: Lysine biosynthesis regulatory protein LYS14 (790 aa).

Disordered stretches follow at residues 1–50 and 72–157; these read MFES…SCFE and FNHK…YSRN. Residues 35–47 show a composition bias toward low complexity; that stretch reads SGSSFTNSGTSTS. Polar residues-rich tracts occupy residues 75 to 113 and 120 to 142; these read KQMTSPSNSNIGGENVESTTSSNDGSNENAGHPTTSEQD and TISQADDNGHSSLTPNPAVTSTV. A DNA-binding region (zn(2)-C6 fungal-type) is located at residues 159 to 186; sequence CSECKRRRMKCDETKPTCWQCARLNRQC. Residues 195-258 form a disordered region; it reads KKRRTSNAQR…PKPITDNGKN (64 aa). The segment covering 222-239 has biased composition (basic residues); it reads ARKRQHSSCKAEKKKKVR.

Its subcellular location is the nucleus. Its function is as follows. Activates the transcription of lysine biosynthesis genes. This activation is dependent on the inducer alpha-aminoadipate semialdehyde and repressed by lysine. The chain is Lysine biosynthesis regulatory protein LYS14 (LYS14) from Saccharomyces cerevisiae (strain ATCC 204508 / S288c) (Baker's yeast).